The following is a 115-amino-acid chain: Succinate dehydrogenase assembly factor 3, mitochondrial (115 aa).

Belongs to the complex I LYR family. SDHAF3 subfamily. In terms of assembly, interacts with the iron-sulfur protein subunit within the SDH catalytic dimer.

It is found in the mitochondrion matrix. Its function is as follows. Plays an essential role in the assembly of succinate dehydrogenase (SDH), an enzyme complex (also referred to as respiratory complex II) that is a component of both the tricarboxylic acid (TCA) cycle and the mitochondrial electron transport chain, and which couples the oxidation of succinate to fumarate with the reduction of ubiquinone (coenzyme Q) to ubiquinol. Promotes maturation of the iron-sulfur protein subunit of the SDH catalytic dimer, protecting it from the deleterious effects of oxidants. May act together with SDHAF1. In Nematostella vectensis (Starlet sea anemone), this protein is Succinate dehydrogenase assembly factor 3, mitochondrial (acn9).